The primary structure comprises 888 residues: MNPTLVVELSGDKTLEPHRLGGKAHSLNHLIHAGLPVPPAFCITAQAYRQFIEFAVPGALLDTGAPGNVRDMILSAAIPAPLDLAIRHACKQLGDGASLAVRSSALEEDGLTHSFAGQYDTYLHVRGDDEVVRKVQSCWASLWAERAAQYSRTSAAQSDIAVVLQIMVDADAAGVMFTQDPLTGDANHIVIDSCWGLGEGVVSGQVTTDSFILDKASGEIRERQIRHKPHYCQRDPQGRVTLLQTPEARRDAPSLTPEQLQQLARLARQTRMIYGAELDIEWAVKDDRVWLLQARPITTQAKPVQMLYANPWESDPTIKERAFFSRMDTGEIVTGLMTPLGLSFCQFYQKHIHGPAIKTMGLADIGDWQIYMGYLQGYVYLNISGSAYMLRQCPPTRDEMKFTTRYATADIDFSGYKNPYGPGVQGWAYLKSAWHWLKQQRHNLRSAGATVDAMIALRQRETRRFLALDLTTMTHQELERELSRIDGYFLDSCAAYMPFFLQSFALYDALALTCERYLKGRGNGLQNRIKASMNNLRTIEVTLGILSLVETVNRQPALKALFERHSAQELVTVLPTDPESRAFWQSDFSAFLFEFGARGRQEFELSLPRWNDDPSYLLQVMKMYLQHPVDLHTKLRETERLRHEDSAALLKAMPWFGRMKLKFITKLYGVMAERREATRPTFVTETWFYRRIMLEVLRRLEAQGLVKSADLPYVDFERFRAFMAGEQSAQEAFAADLIERNRHQHLLNLHAEEPPMAIVGGYQPRMKAPTAENAAGMLSGLAASPGKVVAKARVITDLLAQAGELQPNEILVARFTDASWTPLFALAAGIVTDIGSALSHSCIVAREFGIPAAVNLKNATQLINSGDTLILDGDSGTVIIQRGERADG.

The protein belongs to the PigC family.

Its pathway is antibiotic biosynthesis; prodigiosin biosynthesis. In terms of biological role, involved in the biosynthesis of 2-methyl-3-n-amyl-pyrrole (MAP), one of the terminal products involved in the biosynthesis of the red antibiotic prodigiosin (Pig). Catalyzes the transfer of 2-methyl-3-n-amyl-pyrrole (MAP) to 4-methoxy-2,2'-bipyrrole-5-carbaldehyde (MBC) to yield prodigiosin. It is able to use substrates with a variety of monocyclic rings in place of the pyrrolic ring A of its natural substrate. This chain is Prodigiosin synthesizing transferase PigC, found in Serratia marcescens.